A 403-amino-acid chain; its full sequence is 26S proteasome regulatory subunit 6B homolog (403 aa).

An N-acetylmethionine modification is found at Met1. 191–198 serves as a coordination point for ATP; the sequence is GPPGTGKT.

It belongs to the AAA ATPase family.

It is found in the cytoplasm. The protein localises to the nucleus. Functionally, the 26S proteasome is involved in the ATP-dependent degradation of ubiquitinated proteins. The regulatory (or ATPase) complex confers ATP dependency and substrate specificity to the 26S complex. This is 26S proteasome regulatory subunit 6B homolog (psmC4) from Dictyostelium discoideum (Social amoeba).